A 352-amino-acid polypeptide reads, in one-letter code: MTIAIGKPEEKTSWFDKVDDWVRRDRFVFVGWSGLLLFPTAYLALGGWLTGTTFVTSWYTHGLASSYLEGCNFLTAAVSTPANSLGHSLLLLWGPEAQGDLTRWFQLGGLWTFVALHGAFALIGFMLRQFEIARSVKLRPYNAIAFSAPISVFVSVFLIYPLGQSGWFFAPSFGVAAIFRFILFFQGFHNWTLNPFHMMGVAGVLGAALLCAIHGATVENTLFEDGDGANTFRAFNPTQAEETYSMVTANRFWSQIFGVAFSNKRWLHFFMLFVPVTGLWMSALGVVGLALNLRAYDFVSQEIRAAEDPEFETFYTKNILLNEGIRAWMAAQDQPHEKLVFPEEVLPRGNAL.

Thr2 carries the N-acetylthreonine modification. Position 2 is a phosphothreonine (Thr2). A helical transmembrane segment spans residues Thr40–Thr60. His117 contributes to the chlorophyll a binding site. A helical membrane pass occupies residues Gly124–Pro140. Pheophytin a-binding residues include Gln129 and Asn142. The helical transmembrane segment at Val152–Ser165 threads the bilayer. Residue His197 participates in chlorophyll a binding. The chain crosses the membrane as a helical span at residues Ala207 to Asp227. A plastoquinone is bound by residues His214 and Phe261. His214 provides a ligand contact to Fe cation. A Fe cation-binding site is contributed by His268. Residues Gly278 to Arg294 form a helical membrane-spanning segment.

The protein belongs to the reaction center PufL/M/PsbA/D family. In terms of assembly, PSII is composed of 1 copy each of membrane proteins PsbA, PsbB, PsbC, PsbD, PsbE, PsbF, PsbH, PsbI, PsbJ, PsbK, PsbL, PsbM, PsbT, PsbX, PsbY, PsbZ, Psb30/Ycf12, at least 3 peripheral proteins of the oxygen-evolving complex and a large number of cofactors. It forms dimeric complexes. It depends on The D1/D2 heterodimer binds P680, chlorophylls that are the primary electron donor of PSII, and subsequent electron acceptors. It shares a non-heme iron and each subunit binds pheophytin, quinone, additional chlorophylls, carotenoids and lipids. There is also a Cl(-1) ion associated with D1 and D2, which is required for oxygen evolution. The PSII complex binds additional chlorophylls, carotenoids and specific lipids. as a cofactor.

Its subcellular location is the plastid. The protein localises to the chloroplast thylakoid membrane. It carries out the reaction 2 a plastoquinone + 4 hnu + 2 H2O = 2 a plastoquinol + O2. In terms of biological role, photosystem II (PSII) is a light-driven water:plastoquinone oxidoreductase that uses light energy to abstract electrons from H(2)O, generating O(2) and a proton gradient subsequently used for ATP formation. It consists of a core antenna complex that captures photons, and an electron transfer chain that converts photonic excitation into a charge separation. The D1/D2 (PsbA/PsbD) reaction center heterodimer binds P680, the primary electron donor of PSII as well as several subsequent electron acceptors. D2 is needed for assembly of a stable PSII complex. The chain is Photosystem II D2 protein from Pleurastrum terricola (Filamentous green alga).